Reading from the N-terminus, the 61-residue chain is Small ribosomal subunit protein uS14 (61 aa).

Zn(2+) is bound by residues cysteine 24, cysteine 27, cysteine 40, and cysteine 43.

The protein belongs to the universal ribosomal protein uS14 family. Zinc-binding uS14 subfamily. As to quaternary structure, part of the 30S ribosomal subunit. Contacts proteins S3 and S10. Requires Zn(2+) as cofactor.

Its function is as follows. Binds 16S rRNA, required for the assembly of 30S particles and may also be responsible for determining the conformation of the 16S rRNA at the A site. The chain is Small ribosomal subunit protein uS14 from Halothermothrix orenii (strain H 168 / OCM 544 / DSM 9562).